A 296-amino-acid chain; its full sequence is Phosphate transport system permease protein PstA (296 aa).

At 1–28 the chain is on the cytoplasmic side; the sequence is MAMVEMQTTAALAESRRKMQARRRLKNR. Residues 29–50 form a helical membrane-spanning segment; it reads IALTLSMATMAFGLFWLIWILM. Residues 51-82 are Periplasmic-facing; it reads STITRGIDGMSLALFTEMTPPPNTEGGGLANA. Residues 83-102 traverse the membrane as a helical segment; sequence LAGSGLLILWATVFGTPLGI. Positions 83–286 constitute an ABC transmembrane type-1 domain; sequence LAGSGLLILW…LCVLLLNILA (204 aa). Residues 103–126 are Cytoplasmic-facing; sequence MAGIYLAEYGRKSWLAEVIRFIND. The chain crosses the membrane as a helical span at residues 127–146; sequence ILLSAPSIVVGLFVYTIVVA. Residues 147-150 are Periplasmic-facing; the sequence is QMEH. The chain crosses the membrane as a helical span at residues 151–169; that stretch reads FSGWAGVIALALLQVPIVI. Residues 170 to 204 lie on the Cytoplasmic side of the membrane; the sequence is RTTENMLKLVPYSLREAAYALGTPKWKMISAITLK. A helical membrane pass occupies residues 205-223; it reads ASVSGIMTGILLAIARIAG. At 224–266 the chain is on the periplasmic side; that stretch reads ETAPLLFTALSNQFWSTDMMQPIANLPVTIFKFAMSPFAEWQQ. Residues 267 to 286 traverse the membrane as a helical segment; it reads LAWAGVLIITLCVLLLNILA. Residues 287–296 are Cytoplasmic-facing; the sequence is RVVFAKNKHG.

The protein belongs to the binding-protein-dependent transport system permease family. CysTW subfamily.

It is found in the cell inner membrane. Functionally, part of the binding-protein-dependent transport system for phosphate; probably responsible for the translocation of the substrate across the membrane. The sequence is that of Phosphate transport system permease protein PstA (pstA) from Escherichia coli (strain K12).